The sequence spans 370 residues: Molybdenum import ATP-binding protein ModC (370 aa).

The 232-residue stretch at 1 to 232 folds into the ABC transporter domain; the sequence is MLDIDVLRQQ…PDIPDFAAQR (232 aa). 30–37 contributes to the ATP binding site; it reads GRSGAGKT. The Mop domain maps to 292–363; it reads MVSVQNILAA…IKAMSLLRDE (72 aa).

The protein belongs to the ABC transporter superfamily. Molybdate importer (TC 3.A.1.8) family. As to quaternary structure, the complex is composed of two ATP-binding proteins (ModC), two transmembrane proteins (ModB) and a solute-binding protein (ModA).

Its subcellular location is the cell inner membrane. It catalyses the reaction molybdate(out) + ATP + H2O = molybdate(in) + ADP + phosphate + H(+). Functionally, part of the ABC transporter complex ModABC involved in molybdenum import. Responsible for energy coupling to the transport system. The protein is Molybdenum import ATP-binding protein ModC of Rhodospirillum rubrum (strain ATCC 11170 / ATH 1.1.1 / DSM 467 / LMG 4362 / NCIMB 8255 / S1).